Reading from the N-terminus, the 1025-residue chain is Interferon-induced helicase C domain-containing protein 1 (1025 aa).

CARD domains lie at 7-97 (AEDS…YVKP) and 110-190 (AHDE…QTGN). Residues lysine 23 and lysine 43 each participate in a glycyl lysine isopeptide (Lys-Gly) (interchain with G-Cter in ISG15) cross-link. Residues 273-297 (SLGHNSNMGRDSGTMGSDSDESVIQ) form a disordered region. Residues 275–297 (GHNSNMGRDSGTMGSDSDESVIQ) are compositionally biased toward polar residues. 3 positions are modified to phosphoserine: serine 289, serine 291, and serine 302. Residues 317 to 510 (AQPALDGKNI…SEAEKHILNI (194 aa)) form the Helicase ATP-binding domain. Phosphoserine is present on residues serine 645 and serine 648. In terms of domain architecture, Helicase C-terminal spans 700–872 (KLIKLRNTIL…NMKPEEYAHK (173 aa)). Phosphoserine; by RIOK3 is present on serine 828. In terms of domain architecture, RLR CTR spans 893–1020 (AKQYNDNPSL…PDLDYSEYCL (128 aa)). Residues cysteine 907, cysteine 910, cysteine 962, and cysteine 964 each contribute to the Zn(2+) site.

It belongs to the helicase family. RLR subfamily. Monomer in the absence of ligands and homodimerizes in the presence of dsRNA ligands. Can assemble into helical or linear polymeric filaments on long dsRNA. Interacts with MAVS/IPS1. Interacts (via the CARD domains) with TKFC, the interaction is inhibited by viral infection. Interacts with PCBP2. Interacts with NLRC5. Interacts with PIAS2-beta. Interacts with DDX60. Interacts with ANKRD17. Interacts with IKBKE. Interacts with ATG5 and ATG12, either as ATG5 and ATG12 monomers or as ATG12-ATG5 conjugates. Interacts with ZCCHC3; leading to activate IFIH1/MDA5. Interacts with RNF123. Interacts with DDX3X. Interacts with NOD1; this interaction promotes transcription of antiviral genes and inhibition of viral replication. Interacts with ECSIT; this interaction bridges IFIH1 to the MAVS complex at the mitochondrion. In terms of processing, during apoptosis, processed into 3 cleavage products. The helicase-containing fragment, once liberated from the CARD domains, translocate from the cytoplasm to the nucleus. The processed protein significantly sensitizes cells to DNA degradation. Post-translationally, sumoylated. Sumoylation positively regulates its role in type I interferon induction and is enhanced by PIAS2-beta. Ubiquitinated by RNF125, leading to its degradation by the proteasome. USP17/UPS17L2-dependent deubiquitination positively regulates the receptor. Ubiquitinated by TRIM25 via 'Lys-63'-linked ubiquitination, promoting activation of IFIH1/MDA5. Ubiquitinated by TRIM40 via 'Lys-48'-linked ubiquitination; leading to proteasomal degradation. Ubiquitinated by TRIM65 via 'Lys-63'-linked ubiquitination, promoting activation of IFIH1/MDA5. In terms of processing, ISGylated by ISG15. ISGylation increases upon infection with viruses. ISGylation at Lys-23 and Lys-43 is dependent of dephosphorylation, regulates mitochondrial translocation and oligomerization. Essential for IFIH1/MDA5-mediated cytokine responses and restriction of virus replication. Post-translationally, phosphorylated. Dephosphorylated by phsophatases PP1; dephosphorylation precedes and is required for ISGylation. As to expression, expression is prominent in lung, liver, kidney, heart and spleen (at protein level). Widely expressed at low level.

The protein localises to the cytoplasm. The protein resides in the nucleus. Its subcellular location is the mitochondrion. It carries out the reaction ATP + H2O = ADP + phosphate + H(+). Functionally, innate immune receptor which acts as a cytoplasmic sensor of viral nucleic acids and plays a major role in sensing viral infection and in the activation of a cascade of antiviral responses including the induction of type I interferons and pro-inflammatory cytokines. Its ligands include mRNA lacking 2'-O-methylation at their 5' cap and long-dsRNA (&gt;1 kb in length). Upon ligand binding it associates with mitochondria antiviral signaling protein (MAVS/IPS1) which activates the IKK-related kinases: TBK1 and IKBKE which phosphorylate interferon regulatory factors: IRF3 and IRF7 which in turn activate transcription of antiviral immunological genes, including interferons (IFNs); IFN-alpha and IFN-beta. Responsible for detecting the Picornaviridae family members such as encephalomyocarditis virus (EMCV), mengo encephalomyocarditis virus (ENMG), and theiler's murine encephalomyelitis virus (TMEV). Can also detect other viruses such as dengue virus (DENV), west Nile virus (WNV), and reovirus. Also involved in antiviral signaling in response to viruses containing a dsDNA genome, such as vaccinia virus. Plays an important role in amplifying innate immune signaling through recognition of RNA metabolites that are produced during virus infection by ribonuclease L (RNase L). May play an important role in enhancing natural killer cell function and may be involved in growth inhibition and apoptosis in several tumor cell lines. The protein is Interferon-induced helicase C domain-containing protein 1 of Mus musculus (Mouse).